A 1249-amino-acid chain; its full sequence is Calmodulin-regulated spectrin-associated protein 3 (1249 aa).

Disordered regions lie at residues Lys183–Gln205, Pro328–His385, Val430–Pro457, Leu473–Glu609, Leu632–Leu696, Gln714–Ala1029, and Asn1061–Arg1111. Thr184 bears the Phosphothreonine mark. Over residues Ala189–Gln205 the composition is skewed to low complexity. A Phosphoserine modification is found at Ser193. The Calponin-homology (CH) domain occupies Pro203–Met312. Residues Ser334, Ser341, Ser347, Ser351, Ser368, Ser373, and Ser382 each carry the phosphoserine modification. Residues Ser341–Pro352 are compositionally biased toward low complexity. Positions Gly364–Met383 are enriched in polar residues. Residues Pro437–Gly454 show a composition bias toward pro residues. A phosphoserine mark is found at Ser547, Ser554, and Ser560. Positions Ala568–Ala579 are enriched in basic and acidic residues. Positions Glu594–Ser604 are enriched in low complexity. A coiled-coil region spans residues Glu594–His628. A compositionally biased stretch (acidic residues) spans Gly647–Asp657. At Ser685 the chain carries Phosphoserine. Residues Leu696 to Ala729 adopt a coiled-coil conformation. Residues Pro731–Ala741 show a composition bias toward pro residues. The span at Ala754–Arg779 shows a compositional bias: low complexity. Ser769 carries the phosphoserine modification. Phosphothreonine is present on Thr799. Ser814 is modified (phosphoserine). Polar residues predominate over residues Ser814–Ser825. Residues Tyr889–Gln940 show a composition bias toward basic and acidic residues. Residues Glu896–Ala935 are a coiled coil. Positions Val950–Ala964 are enriched in low complexity. Positions Val970–Leu998 are enriched in basic and acidic residues. Ser1074 carries the post-translational modification Phosphoserine. Residues Gly1109–Lys1243 enclose the CKK domain.

This sequence belongs to the CAMSAP1 family. Interacts with PLEKHA7. Interacts with CAMSAP2. Interacts with KATNA1 and KATNB1; leading to regulate the length of CAMSAP3-decorated microtubule stretches. Interacts with AKAP9; regulating Golgi assembly in epithelial cells. Interacts with MACF1. Interacts with AKNA.

It localises to the cytoplasm. The protein resides in the cytoskeleton. It is found in the cell junction. Its subcellular location is the adherens junction. The protein localises to the cilium axoneme. It localises to the cilium basal body. Functionally, key microtubule-organizing protein that specifically binds the minus-end of non-centrosomal microtubules and regulates their dynamics and organization. Specifically recognizes growing microtubule minus-ends and autonomously decorates and stabilizes microtubule lattice formed by microtubule minus-end polymerization. Acts on free microtubule minus-ends that are not capped by microtubule-nucleating proteins or other factors and protects microtubule minus-ends from depolymerization. In addition, it also reduces the velocity of microtubule polymerization. Required for the biogenesis and the maintenance of zonula adherens by anchoring the minus-end of microtubules to zonula adherens and by recruiting the kinesin KIFC3 to those junctional sites. Required for orienting the apical-to-basal polarity of microtubules in epithelial cells: acts by tethering non-centrosomal microtubules to the apical cortex, leading to their longitudinal orientation. Plays a key role in early embryos, which lack centrosomes: accumulates at the microtubule bridges that connect pairs of cells and enables the formation of a non-centrosomal microtubule-organizing center that directs intracellular transport in the early embryo. Couples non-centrosomal microtubules with actin: interaction with MACF1 at the minus ends of non-centrosomal microtubules, tethers the microtubules to actin filaments, regulating focal adhesion size and cell migration. Plays a key role in the generation of non-centrosomal microtubules by accumulating in the pericentrosomal region and cooperating with KATNA1 to release non-centrosomal microtubules from the centrosome. Through the microtubule cytoskeleton, also regulates the organization of cellular organelles including the Golgi and the early endosomes. Through interaction with AKAP9, involved in translocation of Golgi vesicles in epithelial cells, where microtubules are mainly non-centrosomal. Plays an important role in motile cilia function by facilitatating proper orientation of basal bodies and formation of central microtubule pairs in motile cilia. The polypeptide is Calmodulin-regulated spectrin-associated protein 3 (Homo sapiens (Human)).